Consider the following 257-residue polypeptide: MLAKRIIPCLDVRDGQVVKGVQFRNHEIIGDIVPLAQRYAEEGADELVFYDITASSDGRVVDKSWVARVAEVIDIPFCVAGGIKSAEDAARILEFGADKVSINSPALANPQLITDLADKFGVQCIVVGIDSYYDKETGKYQVYQFTGDEERTKATQWETRDWVQEVQKRGAGEIVLNMMNQDGVRNGYDIKQLNMVREVCNVPLIASGGAGAMEHFAEAYQKANVDGALAASVFHKQVINIGELKQYLKQQGIEVRL.

Catalysis depends on residues Asp-11 and Asp-130.

The protein belongs to the HisA/HisF family. In terms of assembly, heterodimer of HisH and HisF.

Its subcellular location is the cytoplasm. It carries out the reaction 5-[(5-phospho-1-deoxy-D-ribulos-1-ylimino)methylamino]-1-(5-phospho-beta-D-ribosyl)imidazole-4-carboxamide + L-glutamine = D-erythro-1-(imidazol-4-yl)glycerol 3-phosphate + 5-amino-1-(5-phospho-beta-D-ribosyl)imidazole-4-carboxamide + L-glutamate + H(+). The protein operates within amino-acid biosynthesis; L-histidine biosynthesis; L-histidine from 5-phospho-alpha-D-ribose 1-diphosphate: step 5/9. In terms of biological role, IGPS catalyzes the conversion of PRFAR and glutamine to IGP, AICAR and glutamate. The HisF subunit catalyzes the cyclization activity that produces IGP and AICAR from PRFAR using the ammonia provided by the HisH subunit. The sequence is that of Imidazole glycerol phosphate synthase subunit HisF from Vibrio campbellii (strain ATCC BAA-1116).